A 686-amino-acid chain; its full sequence is Methionine--tRNA ligase (686 aa).

A 'HIGH' region motif is present at residues 15–25; it reads PYANGSIHLGH. The Zn(2+) site is built by cysteine 146, cysteine 149, cysteine 159, and cysteine 162. The short motif at 332 to 336 is the 'KMSKS' region element; it reads KMSKS. Residue lysine 335 participates in ATP binding. Residues 585-686 form the tRNA-binding domain; sequence AFEAVDMRIA…EGAQPGMRVM (102 aa).

The protein belongs to the class-I aminoacyl-tRNA synthetase family. MetG type 1 subfamily. As to quaternary structure, homodimer. The cofactor is Zn(2+).

It is found in the cytoplasm. It carries out the reaction tRNA(Met) + L-methionine + ATP = L-methionyl-tRNA(Met) + AMP + diphosphate. In terms of biological role, is required not only for elongation of protein synthesis but also for the initiation of all mRNA translation through initiator tRNA(fMet) aminoacylation. The protein is Methionine--tRNA ligase of Aliivibrio fischeri (strain ATCC 700601 / ES114) (Vibrio fischeri).